The primary structure comprises 123 residues: Small ribosomal subunit protein bS16 (123 aa).

Positions 87-123 (VKNNPVKAKPGKRAQERAAEKAQKVADAAAAAADAAE) are disordered. Residues 99-110 (RAQERAAEKAQK) show a composition bias toward basic and acidic residues. The segment covering 111-123 (VADAAAAAADAAE) has biased composition (low complexity).

This sequence belongs to the bacterial ribosomal protein bS16 family.

The polypeptide is Small ribosomal subunit protein bS16 (Rhizobium johnstonii (strain DSM 114642 / LMG 32736 / 3841) (Rhizobium leguminosarum bv. viciae)).